A 373-amino-acid chain; its full sequence is MPGWSCLVTGAGGFLGQRIIQLLVQEKDLEEIRVLDKVFKPETREQFFNLGTSIKVTVLEGDILDTQYLRRACQGISVVIHTAAIIDVTGVIPRQTILDVNLKGTQNLLEACIQASVPAFIFSSSVDVAGPNSYKDIVLNGHEDEHRESTWSDPYPYSKKMAEKAVLAANGSMLKNGGTLQTCALRPMCIYGERSQFLSNTIIKALKNKFILRGGGKFSTANPVYVGNVAWAHILAARGLRNPKKSPNIQGEFYYISDDTPHQSYDDLNYTLSKEWGFCLNSRWYLPVPILYWLAFLLETVSFLLSPIYRYIPPFNRHLVTLTASTFTFSYKKAQRDLGYEPLVSWEEAKQKTSEWIGTLVEQHRETLDTKSQ.

Residue Tyr155 is the Proton acceptor of the active site. Lys159 serves as a coordination point for NAD(+). The chain crosses the membrane as a helical span at residues Val288 to Ile308.

Belongs to the 3-beta-HSD family. As to expression, liver and kidney. Greater expression in liver.

It is found in the endoplasmic reticulum membrane. The protein localises to the mitochondrion membrane. It catalyses the reaction a 3beta-hydroxy-Delta(5)-steroid + NAD(+) = a 3-oxo-Delta(5)-steroid + NADH + H(+). It carries out the reaction a 3-oxo-Delta(5)-steroid = a 3-oxo-Delta(4)-steroid. It functions in the pathway lipid metabolism; steroid biosynthesis. 3-beta-HSD is a bifunctional enzyme, that catalyzes the oxidative conversion of Delta(5)-ene-3-beta-hydroxy steroid, and the oxidative conversion of ketosteroids. The 3-beta-HSD enzymatic system plays a crucial role in the biosynthesis of all classes of hormonal steroids. The chain is 3 beta-hydroxysteroid dehydrogenase/Delta 5--&gt;4-isomerase type 3 (Hsd3b3) from Mus musculus (Mouse).